Here is a 412-residue protein sequence, read N- to C-terminus: cAMP-dependent protein kinase regulatory subunit (412 aa).

Positions 1–11 (MSNYSHSSNNP) are enriched in polar residues. The interval 1-146 (MSNYSHSSNN…TPPSHPKSEE (146 aa)) is disordered. A compositionally biased stretch (basic and acidic residues) spans 16 to 29 (STKEDKPSSFHKIA). Positions 23–159 (SSFHKIAEDE…RLKTAVSNNF (137 aa)) are dimerization and phosphorylation. 2 stretches are compositionally biased toward polar residues: residues 49–60 (NADNSAGGNNPL) and 119–138 (TSVS…SWTP). At serine 120 the chain carries Phosphoserine. Residues 160 to 291 (LFSH…EEVP), glutamate 238, arginine 247, 292 to 405 (LLSS…TEYS), glutamate 359, and arginine 368 each bind 3',5'-cyclic AMP.

This sequence belongs to the cAMP-dependent kinase regulatory chain family. Tetramer, composed of 2 regulatory (R) and 2 catalytic (C) subunits. In the presence of cAMP it dissociates into 2 active monomeric C subunits and an R dimer.

The polypeptide is cAMP-dependent protein kinase regulatory subunit (pkaR) (Emericella nidulans (strain FGSC A4 / ATCC 38163 / CBS 112.46 / NRRL 194 / M139) (Aspergillus nidulans)).